The sequence spans 141 residues: Hydroperoxide reductase (141 aa).

Belongs to the OsmC/Ohr family. As to quaternary structure, homodimer.

It is found in the cytoplasm. Its function is as follows. Reduces organic and inorganic peroxide substrates. Protects the cell against oxidative stress. This is Hydroperoxide reductase from Mycoplasma genitalium (strain ATCC 33530 / DSM 19775 / NCTC 10195 / G37) (Mycoplasmoides genitalium).